Reading from the N-terminus, the 189-residue chain is Elongation factor P (189 aa).

Belongs to the elongation factor P family.

The protein localises to the cytoplasm. Its pathway is protein biosynthesis; polypeptide chain elongation. Functionally, involved in peptide bond synthesis. Stimulates efficient translation and peptide-bond synthesis on native or reconstituted 70S ribosomes in vitro. Probably functions indirectly by altering the affinity of the ribosome for aminoacyl-tRNA, thus increasing their reactivity as acceptors for peptidyl transferase. The sequence is that of Elongation factor P from Chloroflexus aurantiacus (strain ATCC 29364 / DSM 637 / Y-400-fl).